A 570-amino-acid polypeptide reads, in one-letter code: CDKN2A-interacting protein (570 aa).

Alanine 2 bears the N-acetylalanine mark. One can recognise an XRN2-binding (XTBD) domain in the interval 19 to 126 (VETLRCEGET…KVKKRGISSS (108 aa)). Residues 122–345 (GISSSNEGVE…TSLLMPKSSS (224 aa)) are disordered. Phosphoserine is present on serine 124. A compositionally biased stretch (basic and acidic residues) spans 147–162 (VERDHGKKSAKTDRSA). Residues 167–183 (SSGSKGSSTKSESSGTS) show a composition bias toward low complexity. Residue lysine 176 forms a Glycyl lysine isopeptide (Lys-Gly) (interchain with G-Cter in SUMO1) linkage. Positions 184–198 (ARSNSGVSHQNSSTS) are enriched in polar residues. A compositionally biased stretch (low complexity) spans 203–221 (SVCSQSSSNSSQVTSAGSG). The segment covering 224-233 (SEPEAPDKHG) has biased composition (basic and acidic residues). Serine 234 carries the post-translational modification Phosphoserine. Low complexity-rich tracts occupy residues 234 to 248 (SASF…SLNS) and 271 to 301 (SSVS…PLLS). Over residues 302–317 (CKSSSETASSGLTTKA) the composition is skewed to polar residues. A compositionally biased stretch (low complexity) spans 318–345 (SSEANISSSVSKNSSSSGTSLLMPKSSS). Serine 378 carries the post-translational modification Phosphoserine. The segment at 383-407 (SQLASKSSSQSSTSQLPSKSTSQSS) is disordered. The DRBM domain maps to 452–527 (NHGELLNAAI…SREALKLFLK (76 aa)).

This sequence belongs to the CARF family. Interacts with CDKN2A/p14ARF, p53/TP53 and MDM2. Interacts with CHEK2 and MAPK3. Interacts with XRN2. In terms of processing, may be ubiquitinated.

Its subcellular location is the nucleus. The protein localises to the nucleoplasm. In terms of biological role, regulates DNA damage response and cell proliferation in a dose-dependent manner through a number of signaling pathways involved in cell proliferation, apoptosis and senescence. The protein is CDKN2A-interacting protein (Cdkn2aip) of Rattus norvegicus (Rat).